The chain runs to 203 residues: Small ribosomal subunit protein uS4c (203 aa).

The tract at residues 15–43 (LGSLPGLTSKRPRSGSDLRNQSRSGKRSQ) is disordered. The 81-residue stretch at 89 to 169 (MRLDNILFRL…LPKHLTLHSL (81 aa)) folds into the S4 RNA-binding domain.

This sequence belongs to the universal ribosomal protein uS4 family. As to quaternary structure, part of the 30S ribosomal subunit. Contacts protein S5. The interaction surface between S4 and S5 is involved in control of translational fidelity.

The protein resides in the plastid. It localises to the chloroplast. Functionally, one of the primary rRNA binding proteins, it binds directly to 16S rRNA where it nucleates assembly of the body of the 30S subunit. With S5 and S12 plays an important role in translational accuracy. The chain is Small ribosomal subunit protein uS4c (rps4) from Illicium oligandrum (Star anise).